The primary structure comprises 595 residues: Aspartate--tRNA ligase (595 aa).

Glutamate 176 is a binding site for L-aspartate. Positions 200–203 (QIFK) are aspartate. Arginine 222 is a binding site for L-aspartate. ATP contacts are provided by residues 222-224 (RDE) and glutamine 231. Histidine 450 is a binding site for L-aspartate. Glutamate 484 provides a ligand contact to ATP. Residue arginine 491 coordinates L-aspartate. 536–539 (GLDR) serves as a coordination point for ATP.

This sequence belongs to the class-II aminoacyl-tRNA synthetase family. Type 1 subfamily. Homodimer.

The protein localises to the cytoplasm. The catalysed reaction is tRNA(Asp) + L-aspartate + ATP = L-aspartyl-tRNA(Asp) + AMP + diphosphate. Catalyzes the attachment of L-aspartate to tRNA(Asp) in a two-step reaction: L-aspartate is first activated by ATP to form Asp-AMP and then transferred to the acceptor end of tRNA(Asp). This Halalkalibacterium halodurans (strain ATCC BAA-125 / DSM 18197 / FERM 7344 / JCM 9153 / C-125) (Bacillus halodurans) protein is Aspartate--tRNA ligase.